A 141-amino-acid polypeptide reads, in one-letter code: Photosystem I reaction center subunit IV A, chloroplastic (141 aa).

The transit peptide at 1 to 49 (MASCNMASAASNFLVATPNVASNTNTSRTTMLFFSSKNYGSTAPRLVVR) directs the protein to the chloroplast. Low complexity predominate over residues 57–73 (PAAAATAEPAEAPVKAA). Positions 57–83 (PAAAATAEPAEAPVKAAKPPPIGPKRG) are disordered.

It belongs to the PsaE family. In terms of processing, 2 isoforms exists (ratio 1:1). With or without the N-terminal alanine.

Its subcellular location is the plastid. The protein localises to the chloroplast thylakoid membrane. Its function is as follows. Stabilizes the interaction between PsaC and the PSI core, assists the docking of the ferredoxin to PSI and interacts with ferredoxin-NADP oxidoreductase. This is Photosystem I reaction center subunit IV A, chloroplastic (PSAEA) from Nicotiana sylvestris (Wood tobacco).